The sequence spans 237 residues: Cysteine-rich venom protein DIS2 (237 aa).

A signal peptide spans 1-18; sequence MFVFILLSLAAVLQQSFG. Residues 37–165 enclose the SCP domain; it reads VDKHNAFRRS…SYNYFYVCQY (129 aa). Cystine bridges form between Cys74–Cys152, Cys91–Cys166, Cys147–Cys163, Cys185–Cys192, Cys188–Cys197, Cys201–Cys234, and Cys219–Cys232. The region spanning 201-234 is the ShKT domain; that stretch reads CSREDVFMNCKSLVAQSNCQDDYIRKNCPATCFC.

This sequence belongs to the CRISP family. Expressed by the venom gland.

It is found in the secreted. Weakly blocks contraction of smooth muscle elicited by high potassium-induced depolarization, but does not block caffeine-stimulated contraction. May target voltage-gated calcium channels on smooth muscle. The polypeptide is Cysteine-rich venom protein DIS2 (Dispholidus typus (Boomslang)).